A 284-amino-acid polypeptide reads, in one-letter code: 16S rRNA (guanine(1405)-N(7))-methyltransferase (284 aa).

S-adenosyl-L-methionine contacts are provided by residues Tyr73, 111–113, Arg117, Ala142, Asp165, 191–192, Leu208, and Gln217; these read HAS and DL.

Belongs to the methyltransferase superfamily. Aminoglycoside resistance family.

It carries out the reaction guanosine(1405) in 16S rRNA + S-adenosyl-L-methionine = N(7)-methylguanosine(1405) in 16S rRNA + S-adenosyl-L-homocysteine. Specifically methylates the N(7) position of guanine 1405 in 16S rRNA. Confers resistance to various aminoglycosides, including gentamicin and kanamycin. This chain is 16S rRNA (guanine(1405)-N(7))-methyltransferase (Krm), found in Frankia casuarinae (strain DSM 45818 / CECT 9043 / HFP020203 / CcI3).